The following is a 442-amino-acid chain: tRNA-2-methylthio-N(6)-dimethylallyladenosine synthase (442 aa).

The region spanning 5-122 (KKVFIKTLGC…LPEMIKQKQK (118 aa)) is the MTTase N-terminal domain. [4Fe-4S] cluster contacts are provided by Cys-14, Cys-51, Cys-85, Cys-159, Cys-163, and Cys-166. Positions 145-378 (KAEGAKAYVS…DLLNSNAQII (234 aa)) constitute a Radical SAM core domain. Residues 380-442 (RQMVGTNQRI…LPNSLRGELI (63 aa)) enclose the TRAM domain.

The protein belongs to the methylthiotransferase family. MiaB subfamily. Monomer. [4Fe-4S] cluster is required as a cofactor.

Its subcellular location is the cytoplasm. It catalyses the reaction N(6)-dimethylallyladenosine(37) in tRNA + (sulfur carrier)-SH + AH2 + 2 S-adenosyl-L-methionine = 2-methylsulfanyl-N(6)-dimethylallyladenosine(37) in tRNA + (sulfur carrier)-H + 5'-deoxyadenosine + L-methionine + A + S-adenosyl-L-homocysteine + 2 H(+). Functionally, catalyzes the methylthiolation of N6-(dimethylallyl)adenosine (i(6)A), leading to the formation of 2-methylthio-N6-(dimethylallyl)adenosine (ms(2)i(6)A) at position 37 in tRNAs that read codons beginning with uridine. The sequence is that of tRNA-2-methylthio-N(6)-dimethylallyladenosine synthase from Francisella tularensis subsp. tularensis (strain FSC 198).